The primary structure comprises 320 residues: Methenyltetrahydromethanopterin cyclohydrolase (320 aa).

Belongs to the MCH family.

It is found in the cytoplasm. It catalyses the reaction 5,10-methenyl-5,6,7,8-tetrahydromethanopterin + H2O = N(5)-formyl-5,6,7,8-tetrahydromethanopterin + H(+). Functionally, catalyzes the hydrolysis of methenyl-H(4)MPT(+) to 5-formyl-H(4)MPT. The chain is Methenyltetrahydromethanopterin cyclohydrolase from Methanococcoides burtonii (strain DSM 6242 / NBRC 107633 / OCM 468 / ACE-M).